Consider the following 148-residue polypeptide: MEKTFLMVKPDGVQRAFIGEIVARFEKKGFQLVGAKLMQVTPEIAGQHYAEHKEKPFFGELVDFITSGPVFAMVWQGEGVVDTARNMMGKTRPHEAAPGTIRGDFGVTVAKNIIHGSDSLESAEREIAIFFKEEELVDYSKLMNEWIY.

Residues Lys9, Phe57, Arg85, Thr91, Arg102, and Asn112 each coordinate ATP. Residue Thr91 is modified to Phosphothreonine. His115 (pros-phosphohistidine intermediate) is an active-site residue. Ser122 carries the phosphoserine modification.

Belongs to the NDK family. Homotetramer. Mg(2+) is required as a cofactor.

It localises to the cytoplasm. The enzyme catalyses a 2'-deoxyribonucleoside 5'-diphosphate + ATP = a 2'-deoxyribonucleoside 5'-triphosphate + ADP. It catalyses the reaction a ribonucleoside 5'-diphosphate + ATP = a ribonucleoside 5'-triphosphate + ADP. Functionally, major role in the synthesis of nucleoside triphosphates other than ATP. The ATP gamma phosphate is transferred to the NDP beta phosphate via a ping-pong mechanism, using a phosphorylated active-site intermediate. The sequence is that of Nucleoside diphosphate kinase from Bacillus cereus (strain ATCC 14579 / DSM 31 / CCUG 7414 / JCM 2152 / NBRC 15305 / NCIMB 9373 / NCTC 2599 / NRRL B-3711).